A 152-amino-acid chain; its full sequence is MHCPYCNASDTKVIDSRLAAEGAQVRRRRSCNSCQERFTTFEVVEVVMPRIIKSSGKIEPYDNDKLRRSILLPLQKRPITIDEQEAMISRIEKRVRQMGEREVSSKVLGEIIMSELKTLDDVAYVRFASVYRDFQDIDAFHQEIANIRPNDK.

Residues 3–34 fold into a zinc finger; the sequence is CPYCNASDTKVIDSRLAAEGAQVRRRRSCNSC. Positions 49–139 constitute an ATP-cone domain; that stretch reads PRIIKSSGKI…VYRDFQDIDA (91 aa).

Belongs to the NrdR family. Requires Zn(2+) as cofactor.

Negatively regulates transcription of bacterial ribonucleotide reductase nrd genes and operons by binding to NrdR-boxes. The protein is Transcriptional repressor NrdR of Psychrobacter arcticus (strain DSM 17307 / VKM B-2377 / 273-4).